The sequence spans 359 residues: Protein FAM50 homolog (359 aa).

Disordered regions lie at residues 122-150 (NLDD…EDQP) and 339-359 (PYDP…KSKK). A compositionally biased stretch (acidic residues) spans 123–136 (LDDDEEEEEEDDED). Positions 137–150 (HDKKQLKIKQEDQP) are enriched in basic and acidic residues.

The protein belongs to the FAM50 family.

The protein is Protein FAM50 homolog of Drosophila melanogaster (Fruit fly).